Consider the following 63-residue polypeptide: Race-specific elicitor A9 (63 aa).

The first 23 residues, 1-23 (MKLSLLSVELALLIATTLPLCWA), serve as a signal peptide directing secretion. Positions 24–35 (AALPVGLGVGLD) are excised as a propeptide. Cystine bridges form between Cys37–Cys51, Cys41–Cys54, and Cys47–Cys61.

This necrosis-inducing peptide induces a hypersensitive response on Cf-9 tomato genotypes. Race-specific elicitors are compounds which only induce defense responses in genotypes of host plants which are resistant to the pathogenic race that produces the elicitor, but not in susceptible genotypes. The chain is Race-specific elicitor A9 (AVR9) from Passalora fulva (Tomato leaf mold).